The chain runs to 59 residues: Large ribosomal subunit protein uL30 (59 aa).

Belongs to the universal ribosomal protein uL30 family. As to quaternary structure, part of the 50S ribosomal subunit.

This Psychrobacter sp. (strain PRwf-1) protein is Large ribosomal subunit protein uL30.